Reading from the N-terminus, the 493-residue chain is Tripartite motif-containing protein 5 (493 aa).

Position 2 is an N-acetylalanine (A2). The RING-type zinc-finger motif lies at 15–59 (CPICLELLTQPLSLDCGHSFCQACLTANHKKSMLDKGESSCPVCR). Phosphoserine is present on S86. The B box-type zinc finger occupies 90–132 (QKVDHCARHGEKLLLFCQEDGKVICWLCERSQEHRGHHTFLTE). 4 residues coordinate Zn(2+): C95, H98, C117, and H123. Residues 130–241 (LTEEVAREYQ…ISDLEHRLQG (112 aa)) adopt a coiled-coil conformation. The tract at residues 185–198 (FEQLRDILDWEESN) is required for interaction with GABARAP and for autophagy. A B30.2/SPRY domain is found at 281–493 (LKGMLEVFRE…VPMTLCSPSS (213 aa)).

Belongs to the TRIM/RBCC family. In terms of assembly, can form homodimers and homotrimers. In addition to lower-order dimerization, also exhibits a higher-order multimerization and both low- and high-order multimerizations are essential for its restriction activity. Isoform Delta interacts with BTBD1 and BTBD2. Interacts with PSMC4, PSMC5, PSMD7 and HSPA8/HSC70. Interacts (via B30.2/SPRY domain) with HSPA1A/B. Interacts with PSMC2, MAP3K7/TAK1, TAB2 and TAB3. Interacts with SQSTM1. Interacts with TRIM6 and TRIM34. Interacts with ULK1 (phosphorylated form), GABARAP, GABARAPL1, GABARAPL2, MAP1LC3A, MAP1LC3C and BECN1. In terms of processing, degraded in a proteasome-independent fashion in the absence of viral infection but in a proteasome-dependent fashion following exposure to restriction sensitive virus. Autoubiquitinated in a RING finger- and UBE2D2-dependent manner. Monoubiquitinated by TRIM21. Deubiquitinated by Yersinia YopJ. Ubiquitination may not lead to proteasomal degradation.

It is found in the cytoplasm. Its subcellular location is the nucleus. The catalysed reaction is S-ubiquitinyl-[E2 ubiquitin-conjugating enzyme]-L-cysteine + [acceptor protein]-L-lysine = [E2 ubiquitin-conjugating enzyme]-L-cysteine + N(6)-ubiquitinyl-[acceptor protein]-L-lysine.. The protein operates within protein modification; protein ubiquitination. Capsid-specific restriction factor that prevents infection from non-host-adapted retroviruses. Blocks viral replication early in the life cycle, after viral entry but before reverse transcription. In addition to acting as a capsid-specific restriction factor, also acts as a pattern recognition receptor that activates innate immune signaling in response to the retroviral capsid lattice. Binding to the viral capsid triggers its E3 ubiquitin ligase activity, and in concert with the heterodimeric ubiquitin conjugating enzyme complex UBE2V1-UBE2N (also known as UBC13-UEV1A complex) generates 'Lys-63'-linked polyubiquitin chains, which in turn are catalysts in the autophosphorylation of the MAP3K7/TAK1 complex (includes TAK1, TAB2, and TAB3). Activation of the MAP3K7/TAK1 complex by autophosphorylation results in the induction and expression of NF-kappa-B and MAPK-responsive inflammatory genes, thereby leading to an innate immune response in the infected cell. Restricts infection by N-tropic murine leukemia virus (N-MLV), equine infectious anemia virus (EIAV), simian immunodeficiency virus of macaques (SIVmac), feline immunodeficiency virus (FIV), and bovine immunodeficiency virus (BIV). Plays a role in regulating autophagy through activation of autophagy regulator BECN1 by causing its dissociation from its inhibitors BCL2 and TAB2. Also plays a role in autophagy by acting as a selective autophagy receptor which recognizes and targets HIV-1 capsid protein p24 for autophagic destruction. This chain is Tripartite motif-containing protein 5 (TRIM5), found in Homo sapiens (Human).